Reading from the N-terminus, the 428-residue chain is GTPase Obg (428 aa).

One can recognise an Obg domain in the interval 1–158; the sequence is MFVDQTKIDV…RTLRLELKVL (158 aa). An OBG-type G domain is found at 159–328; that stretch reads ADVGLVGFPS…LMGKTADLVE (170 aa). GTP-binding positions include 165-172, 190-194, 212-215, 282-285, and 309-311; these read GFPSVGKS, FTTLT, DLPG, TQMD, and SSV. Mg(2+)-binding residues include Ser172 and Thr192. In terms of domain architecture, OCT spans 350–428; the sequence is YKKPEDEGFK…IADFTFEFVD (79 aa).

This sequence belongs to the TRAFAC class OBG-HflX-like GTPase superfamily. OBG GTPase family. Monomer. Mg(2+) serves as cofactor.

Its subcellular location is the cytoplasm. An essential GTPase which binds GTP, GDP and possibly (p)ppGpp with moderate affinity, with high nucleotide exchange rates and a fairly low GTP hydrolysis rate. Plays a role in control of the cell cycle, stress response, ribosome biogenesis and in those bacteria that undergo differentiation, in morphogenesis control. The protein is GTPase Obg of Lactobacillus johnsonii (strain CNCM I-12250 / La1 / NCC 533).